The following is a 998-amino-acid chain: RNA-directed RNA polymerase (998 aa).

A helical membrane pass occupies residues 21 to 43 (IVIVSGCGAVAYCISKFWGYGAI). The cytoplasmic stretch occupies residues 44–998 (APYPQSGGNR…AQPGAPTNPK (955 aa)). A capping region spans residues 91 to 282 (NGHAVSGAVR…LVYTIPQHTV (192 aa)). The For RdRp/TNTase activity role is filled by Asp692. A disordered region spans residues 901-998 (AKQTRSNSGT…AQPGAPTNPK (98 aa)). The segment covering 985-998 (PKAGAQPGAPTNPK) has biased composition (low complexity).

The protein belongs to the nodaviridae RNA polymerase family. As to quaternary structure, homododecamer. Forms 2 stacked rings of 35-nm in diameter, arranged in a crown-like structure at the opening of virus-induced replication vesicles. Interacts with protein B2. It depends on Mn(2+) as a cofactor.

The protein resides in the host mitochondrion outer membrane. It catalyses the reaction RNA(n) + a ribonucleoside 5'-triphosphate = RNA(n+1) + diphosphate. RNA-dependent RNA polymerase, which replicates the viral genome composed of 2 RNA segments, RNA1 and RNA2. Does not need an exogenous primer. Also possesses a terminal nucleotidyl transferase (TNTase) activity. The TNTase catalyzes the addition of nucleotide to the 3'-end of plus- and minus-stranded RNAs, probably to repair the 3'-end nucleotide loss. Forms the open necked connection to the cytosol of the virus-induced replication vesicles. Mediates viral RNA1 recruitment. The polypeptide is RNA-directed RNA polymerase (Hepialidae (ghost moths)).